Consider the following 177-residue polypeptide: Iron-sulfur cluster assembly protein SufA (177 aa).

The N-terminal stretch at 1–18 (MTIHIFLCFLLILKIVNA) is a signal peptide. [4Fe-4S] cluster is bound by residues Cys101, Cys169, and Cys171.

It belongs to the HesB/IscA family. In terms of assembly, homodimer. Homotetramer formation is observed in vitro.

It is found in the plastid. Its subcellular location is the apicoplast. It participates in cofactor biosynthesis; iron-sulfur cluster biosynthesis. In terms of biological role, participates in the sulfur mobilization (SUF) pathway for iron-sulfur (Fe-S) cluster biogenesis. Involved in the pre-assembly of [4Fe-4S] clusters and their transfer to target proteins. This is Iron-sulfur cluster assembly protein SufA from Plasmodium falciparum (isolate 3D7).